The primary structure comprises 180 residues: ATP-dependent protease subunit HslV (180 aa).

The active site involves T6. 3 residues coordinate Na(+): G162, C165, and T168.

It belongs to the peptidase T1B family. HslV subfamily. As to quaternary structure, a double ring-shaped homohexamer of HslV is capped on each side by a ring-shaped HslU homohexamer. The assembly of the HslU/HslV complex is dependent on binding of ATP.

The protein localises to the cytoplasm. It catalyses the reaction ATP-dependent cleavage of peptide bonds with broad specificity.. Allosterically activated by HslU binding. Functionally, protease subunit of a proteasome-like degradation complex believed to be a general protein degrading machinery. In Oleidesulfovibrio alaskensis (strain ATCC BAA-1058 / DSM 17464 / G20) (Desulfovibrio alaskensis), this protein is ATP-dependent protease subunit HslV.